We begin with the raw amino-acid sequence, 188 residues long: Pyridoxal 5'-phosphate synthase subunit PdxT (188 aa).

Residue 46–48 (GES) coordinates L-glutamine. The Nucleophile role is filled by Cys78. L-glutamine contacts are provided by residues Arg106 and 132 to 133 (IR). Residues His169 and Glu171 each act as charge relay system in the active site.

Belongs to the glutaminase PdxT/SNO family. As to quaternary structure, in the presence of PdxS, forms a dodecamer of heterodimers. Only shows activity in the heterodimer.

It carries out the reaction aldehydo-D-ribose 5-phosphate + D-glyceraldehyde 3-phosphate + L-glutamine = pyridoxal 5'-phosphate + L-glutamate + phosphate + 3 H2O + H(+). The catalysed reaction is L-glutamine + H2O = L-glutamate + NH4(+). It participates in cofactor biosynthesis; pyridoxal 5'-phosphate biosynthesis. Catalyzes the hydrolysis of glutamine to glutamate and ammonia as part of the biosynthesis of pyridoxal 5'-phosphate. The resulting ammonia molecule is channeled to the active site of PdxS. In Tropheryma whipplei (strain TW08/27) (Whipple's bacillus), this protein is Pyridoxal 5'-phosphate synthase subunit PdxT.